A 96-amino-acid polypeptide reads, in one-letter code: Protein Vpr (96 aa).

Residues 1–42 are homooligomerization; sequence MEQAPEDQGPQREPYNEWTLELLEELKNEAVRHFPRPWLHGL. Ser-79 is modified (phosphoserine; by host).

This sequence belongs to the HIV-1 VPR protein family. Homooligomer, may form homodimer. Interacts with p6-gag region of the Pr55 Gag precursor protein through a (Leu-X-X)4 motif near the C-terminus of the P6gag protein. Interacts with host UNG. May interact with host RAD23A/HHR23A. Interacts with host VPRBP/DCAF1, leading to hijack the CUL4A-RBX1-DDB1-DCAF1/VPRBP complex, mediating ubiquitination of host proteins such as TERT and ZGPAT and arrest of the cell cycle in G2 phase. Phosphorylated on several residues by host. These phosphorylations regulate VPR activity for the nuclear import of the HIV-1 pre-integration complex.

It is found in the virion. Its subcellular location is the host nucleus. The protein resides in the host extracellular space. In terms of biological role, during virus replication, may deplete host UNG protein, and incude G2-M cell cycle arrest. Acts by targeting specific host proteins for degradation by the 26S proteasome, through association with the cellular CUL4A-DDB1 E3 ligase complex by direct interaction with host VPRPB/DCAF-1. Cell cycle arrest reportedly occurs within hours of infection and is not blocked by antiviral agents, suggesting that it is initiated by the VPR carried into the virion. Additionally, VPR induces apoptosis in a cell cycle dependent manner suggesting that these two effects are mechanistically linked. Detected in the serum and cerebrospinal fluid of AIDS patient, VPR may also induce cell death to bystander cells. Its function is as follows. During virus entry, plays a role in the transport of the viral pre-integration (PIC) complex to the host nucleus. This function is crucial for viral infection of non-dividing macrophages. May act directly at the nuclear pore complex, by binding nucleoporins phenylalanine-glycine (FG)-repeat regions. The protein is Protein Vpr of Human immunodeficiency virus type 1 group M subtype G (isolate 92NG083) (HIV-1).